The primary structure comprises 513 residues: Putative thymidine phosphorylase 2 (513 aa).

This sequence belongs to the thymidine/pyrimidine-nucleoside phosphorylase family. Type 2 subfamily.

The enzyme catalyses thymidine + phosphate = 2-deoxy-alpha-D-ribose 1-phosphate + thymine. In Acidovorax sp. (strain JS42), this protein is Putative thymidine phosphorylase 2.